The primary structure comprises 170 residues: Thialysine N-epsilon-acetyltransferase (170 aa).

The 163-residue stretch at 4–166 (VLIREAKEGD…FRFEGEAMRE (163 aa)) folds into the N-acetyltransferase domain. 27–28 (YE) serves as a coordination point for substrate. At K29 the chain carries N6-acetyllysine. E92 is a substrate binding site. Acetyl-CoA contacts are provided by residues 94-96 (IYV), 102-107 (GQGIGS), 133-135 (NKK), and Y140. Y140 (proton donor) is an active-site residue. A substrate-binding site is contributed by E152.

This sequence belongs to the acetyltransferase family. As to quaternary structure, homodimer.

Its subcellular location is the cytoplasm. It catalyses the reaction S-(2-aminoethyl)-L-cysteine + acetyl-CoA = S-(2-acetamidoethyl)-L-cysteine + CoA + H(+). The catalysed reaction is an alkane-alpha,omega-diamine + acetyl-CoA = an N-acetylalkane-alpha,omega-diamine + CoA + H(+). Its function is as follows. Catalyzes the N-acetylation of the amino acid thialysine (S-(2-aminoethyl)-L-cysteine), a L-lysine analog with the 4-methylene group substituted with a sulfur. May also catalyze acetylation of polyamines, such as norspermidine, spermidine or spermine. However, ability to acetylate polyamines is weak, suggesting that it does not act as a diamine acetyltransferase in vivo. The sequence is that of Thialysine N-epsilon-acetyltransferase from Sus scrofa (Pig).